A 713-amino-acid chain; its full sequence is Topoisomerase subunit TopoM (713 aa).

Residues 41–504 (IPSAYDGLKP…DATPVSRGDE (464 aa)) enclose the Topo IIA-type catalytic domain. The active-site O-(5'-phospho-DNA)-tyrosine intermediate is the tyrosine 128. Residues 694-713 (NRAKASIKGSGADVTPAPAE) are disordered.

This sequence belongs to the type II topoisomerase GyrA/ParC subunit family. As to quaternary structure, a complex of TopoN and TopoM, possibly a heterotetramer. The cofactor is Mg(2+).

The catalysed reaction is ATP-dependent breakage, passage and rejoining of double-stranded DNA.. Its activity is regulated as follows. Inhibited by quinolone antibiotic ciprofloxacin and coumarin antibiotic novobiocin, but at much higher concentrations than is usual for DNA gyrase/topoisomerase. Catalyzes the relaxation of negatively supercoiled DNA in the presence of ATP or dATP but not other nucleotides. Individual subunits have no activity. Not able to negatively supercoil DNA, it can however introduce positive supercoils in DNA. Relaxes positive supercoils in an ATP-dependent manner. Catenates and decatenates DNA. Generates dsDNA breaks in the presence of the quinolone antibiotic ciprofloxacin, showing it is a topoisomerase. This chain is Topoisomerase subunit TopoM, found in Mycolicibacterium smegmatis (strain ATCC 700084 / mc(2)155) (Mycobacterium smegmatis).